A 1025-amino-acid polypeptide reads, in one-letter code: Multidrug resistance protein MdtC (1025 aa).

12 helical membrane passes run 16-36 (LLTL…PVAP), 333-353 (EVEQ…FVFL), 360-380 (LIPA…MYLC), 387-407 (LSLM…IVVL), 431-451 (VGFT…PLLM), 459-479 (FFAE…FVSV), 528-548 (WVLL…ISIP), 853-873 (LWLM…LYES), 875-895 (VHPL…LLAL), 897-917 (LFDT…IGIV), 953-973 (PILM…LTSG), and 984-1004 (ITIA…TPVV).

The protein belongs to the resistance-nodulation-cell division (RND) (TC 2.A.6) family. MdtC subfamily. Part of a tripartite efflux system composed of MdtA, MdtB and MdtC. MdtC forms a heteromultimer with MdtB.

The protein resides in the cell inner membrane. This Pantoea ananatis (strain AJ13355) protein is Multidrug resistance protein MdtC.